A 134-amino-acid polypeptide reads, in one-letter code: Phosphoribosyl-AMP cyclohydrolase (134 aa).

Position 80 (Asp80) interacts with Mg(2+). Zn(2+) is bound at residue Cys81. Mg(2+)-binding residues include Asp82 and Asp84. Zn(2+) contacts are provided by Cys98 and Cys105.

It belongs to the PRA-CH family. Homodimer. Requires Mg(2+) as cofactor. Zn(2+) serves as cofactor.

The protein localises to the cytoplasm. The catalysed reaction is 1-(5-phospho-beta-D-ribosyl)-5'-AMP + H2O = 1-(5-phospho-beta-D-ribosyl)-5-[(5-phospho-beta-D-ribosylamino)methylideneamino]imidazole-4-carboxamide. It functions in the pathway amino-acid biosynthesis; L-histidine biosynthesis; L-histidine from 5-phospho-alpha-D-ribose 1-diphosphate: step 3/9. Catalyzes the hydrolysis of the adenine ring of phosphoribosyl-AMP. This chain is Phosphoribosyl-AMP cyclohydrolase, found in Bordetella petrii (strain ATCC BAA-461 / DSM 12804 / CCUG 43448).